Reading from the N-terminus, the 916-residue chain is Protein prickle (916 aa).

Disordered stretches follow at residues 49 to 105 (PLSP…AGGS) and 127 to 176 (QHLQ…IPVD). Residues 145–156 (SSPSPALSSSIT) show a composition bias toward low complexity. Residues 157–171 (TGGGGVTRGGGGGGH) show a composition bias toward gly residues. A PET domain is found at 167-275 (GGGGHIIPVD…TVKQLATNQI (109 aa)). LIM zinc-binding domains lie at 274–338 (QICD…ETLK), 339–399 (PRCS…MFAE), and 400–462 (YCDF…GEPP). Disordered stretches follow at residues 460 to 593 (EPPT…PNHR), 635 to 671 (VIPG…QPQS), 692 to 725 (DAIQ…ENLP), and 763 to 870 (RSKS…DTVY). 3 stretches are compositionally biased toward polar residues: residues 507-517 (SPISERSTPHS), 526-569 (EMST…SRTL), and 642-654 (AKTN…SMPE). Low complexity predominate over residues 655–671 (LSQSLQQQQQQQQQPQS). Residues 777–793 (RSSKSKRRSSHHHQHHR) show a composition bias toward basic residues. The segment covering 796–805 (GESSSYSGTS) has biased composition (low complexity). A compositionally biased stretch (basic and acidic residues) spans 829-844 (VPDVEFIEHQDHHRGD). Over residues 852-867 (RSVCSTCSSSSSSADD) the composition is skewed to low complexity.

The protein belongs to the prickle / espinas / testin family. In terms of assembly, interacts with dsh; PET and LIM domains interact with dsh DEP domain, in wing cells. Interacts with Vang in photoreceptor cells.

It localises to the cell membrane. Functionally, acts in a planar cell polarity (PCP) complex; polarization along the apical/basal axis of epithelial cells. PCP signaling in the wing disk requires the receptor fz and the cytoplasmic proteins dsh and pk. These act in a feedback loop leading to activation of the jnk cascade and subsequent polarized arrangement of hairs and bristles. Dgo and pk compete with one another for dsh binding, thereby modulating fz dsh activity and ensuring tight control over fz PCP signaling. Vang, stan and pk function together to regulate the establishment of tissue polarity in the adult eye. This is Protein prickle from Aedes aegypti (Yellowfever mosquito).